The primary structure comprises 137 residues: uncharacterized protein (137 aa).

Residues 1 to 10 (MISVDVPGHP) are compositionally biased toward low complexity. The tract at residues 1-23 (MISVDVPGHPGDAGGGGGGARKV) is disordered. A compositionally biased stretch (gly residues) spans 11 to 20 (GDAGGGGGGA).

This is an uncharacterized protein from Human adenovirus C serotype 2 (HAdV-2).